The sequence spans 499 residues: Centrosomal protein of 57 kDa (499 aa).

A compositionally biased stretch (polar residues) spans 1-35 (MAAASVSETSASQFSNILAEPSKSNGSMVRHSSSP). Positions 1-58 (MAAASVSETSASQFSNILAEPSKSNGSMVRHSSSPYVVYPPDKPFLNSDLRRSPNKPT) are disordered. A Phosphoserine modification is found at Ser53. The segment at 58–239 (TFAYPESNSR…KAAQLQTGLE (182 aa)) is centrosome localization domain (CLD). A coiled-coil region spans residues 63–241 (ESNSRAIFSA…AQLQTGLEVN (179 aa)). Residues 277 to 490 (AVQPHYRLCL…KDMQSIQNSL (214 aa)) are mediates interaction with microtubules. Disordered stretches follow at residues 334 to 357 (KQVS…SVNE) and 431 to 476 (KQKK…SRKN). A compositionally biased stretch (low complexity) spans 346–357 (SATPPSSSSVNE). The stretch at 389 to 450 (TVELKDNLEC…KTLDEEGNSS (62 aa)) forms a coiled coil. Basic and acidic residues predominate over residues 431-444 (KQKKELKATRKTLD). The segment covering 449–459 (SSSRSTTTGTT) has biased composition (low complexity). The span at 460 to 474 (NKKDFAKPRPGEKSR) shows a compositional bias: basic and acidic residues.

The protein belongs to the translokin family. Homodimer and homooligomer. Interacts with FGF2 and RAP80. Does not interact with FGF1 or FGF2 isoform 24 kDa. Interacts with microtubules.

The protein resides in the nucleus. It is found in the cytoplasm. It localises to the cytoskeleton. The protein localises to the microtubule organizing center. Its subcellular location is the centrosome. Centrosomal protein which may be required for microtubule attachment to centrosomes. May act by forming ring-like structures around microtubules. Mediates nuclear translocation and mitogenic activity of the internalized growth factor FGF2. The sequence is that of Centrosomal protein of 57 kDa (CEP57) from Bos taurus (Bovine).